The primary structure comprises 360 residues: 3-dehydroquinate synthase (360 aa).

NAD(+) contacts are provided by residues 70-75 (DGESLK), 128-129 (TT), Lys-141, and Lys-150. Glu-182, His-243, and His-259 together coordinate Zn(2+).

The protein belongs to the sugar phosphate cyclases superfamily. Dehydroquinate synthase family. Requires NAD(+) as cofactor. The cofactor is Co(2+). Zn(2+) serves as cofactor.

The protein localises to the cytoplasm. The catalysed reaction is 7-phospho-2-dehydro-3-deoxy-D-arabino-heptonate = 3-dehydroquinate + phosphate. It functions in the pathway metabolic intermediate biosynthesis; chorismate biosynthesis; chorismate from D-erythrose 4-phosphate and phosphoenolpyruvate: step 2/7. Functionally, catalyzes the conversion of 3-deoxy-D-arabino-heptulosonate 7-phosphate (DAHP) to dehydroquinate (DHQ). The protein is 3-dehydroquinate synthase of Thermoplasma volcanium (strain ATCC 51530 / DSM 4299 / JCM 9571 / NBRC 15438 / GSS1).